Consider the following 311-residue polypeptide: Serpentine receptor class gamma-6 (311 aa).

Helical transmembrane passes span 24-44, 58-78, 101-121, 148-168, 200-220, 235-255, and 266-286; these read MGQL…IYVI, FWLL…FDIF, PLLI…KMVA, LTAC…NILI, YMQI…AILW, IWFA…YLHM, and IFML…VIMI.

This sequence belongs to the nematode receptor-like protein srg family.

Its subcellular location is the membrane. This is Serpentine receptor class gamma-6 (srg-6) from Caenorhabditis elegans.